The following is an 833-amino-acid chain: Glycerol-3-phosphate acyltransferase (833 aa).

Positions 309–314 (CHRSHI) match the HXXXXD motif motif.

It belongs to the GPAT/DAPAT family.

It localises to the cell inner membrane. The catalysed reaction is sn-glycerol 3-phosphate + an acyl-CoA = a 1-acyl-sn-glycero-3-phosphate + CoA. It functions in the pathway phospholipid metabolism; CDP-diacylglycerol biosynthesis; CDP-diacylglycerol from sn-glycerol 3-phosphate: step 1/3. The chain is Glycerol-3-phosphate acyltransferase from Pseudomonas savastanoi pv. phaseolicola (strain 1448A / Race 6) (Pseudomonas syringae pv. phaseolicola (strain 1448A / Race 6)).